Reading from the N-terminus, the 343-residue chain is Glyceraldehyde-3-phosphate dehydrogenase (343 aa).

Residues 11 to 12 (TI) and G110 each bind NAD(+). 139–141 (SCN) provides a ligand contact to D-glyceraldehyde 3-phosphate. The Nucleophile role is filled by C140. R168 lines the NAD(+) pocket. 194 to 195 (HG) is a binding site for D-glyceraldehyde 3-phosphate. Q301 provides a ligand contact to NAD(+).

It belongs to the glyceraldehyde-3-phosphate dehydrogenase family. In terms of assembly, homotetramer.

The protein resides in the cytoplasm. The catalysed reaction is D-glyceraldehyde 3-phosphate + phosphate + NADP(+) = (2R)-3-phospho-glyceroyl phosphate + NADPH + H(+). The enzyme catalyses D-glyceraldehyde 3-phosphate + phosphate + NAD(+) = (2R)-3-phospho-glyceroyl phosphate + NADH + H(+). Its pathway is carbohydrate degradation; glycolysis; pyruvate from D-glyceraldehyde 3-phosphate: step 1/5. The sequence is that of Glyceraldehyde-3-phosphate dehydrogenase from Methanoregula boonei (strain DSM 21154 / JCM 14090 / 6A8).